The chain runs to 500 residues: Zinc finger protein PLAG1 (500 aa).

The segment at 1–30 (MATVIPGDLSEVRDTQKVPSGKRKRGETKP) is disordered. Residues 2-84 (ATVIPGDLSE…SKYKLQRHMA (83 aa)) form an interaction with KPNA2 region. Residues 22-25 (KRKR) carry the Nuclear localization signal motif. 7 consecutive C2H2-type zinc fingers follow at residues 34–56 (FPCQ…SYSH), 62–86 (YKCI…MATH), 92–114 (HKCN…LHTH), 121–143 (FKCE…LALH), 150–172 (LTCK…LKSH), 185–207 (HQCE…MVVH), and 213–236 (FLCQ…KKSH). Residues 41-242 (KAFNSVEKLK…KKSHNQELLK (202 aa)) form a decreased nuclear import with localization in the nucleus but also in the cytoplasm region. The segment at 243 to 384 (VKTEPVDFLD…QASSSSKLGL (142 aa)) is repression domain; contains 3 sumoylation motifs and massively decrease transcription activity. The interval 243 to 500 (VKTEPVDFLD…TLPRFHQAFQ (258 aa)) is activates transcription; Inhibition of nuclear import due to lack of NLS and KPNA2 interaction. Residues lysine 244 and lysine 263 each participate in a glycyl lysine isopeptide (Lys-Gly) (interchain with G-Cter in SUMO) cross-link. Residues 365 to 388 (GGVPSSSQDSQASSSSKLGLDPQI) are disordered. Positions 369-380 (SSSQDSQASSSS) are enriched in low complexity. The interval 385–500 (DPQIGSLDDG…TLPRFHQAFQ (116 aa)) is massively activates transcription.

Belongs to the krueppel C2H2-type zinc-finger protein family. As to quaternary structure, interacts with KPNA2, which escorts protein to the nucleus via interaction with nuclear localization signal. Interacts with E3 SUMO-protein ligase PIAS1, PIAS2 and PIAS4. Sumoylated with SUMO1; which inhibits transcriptional activity, but does not affect nuclear localization. Blockers of sumoylation pathway such as SENP3 and inactive UBE2I increases transcriptional capacity. Sumoylation is increased in the presence of PIAS1. In terms of processing, acetylated by lysine acetyltransferase EP300; which activates transcriptional capacity. Lysine residues that are sumoylated also seem to be target for acetylation. Expressed in fetal tissues such as lung, liver and kidney. Not detected or weak detection in normal adult tissues, but highly expressed in salivary gland with benign or malignant pleiomorphic adenomas with or without 8q12 aberrations, with preferential occurrence in benign tumors.

Its subcellular location is the nucleus. Its function is as follows. Transcription factor whose activation results in up-regulation of target genes, such as IGFII, leading to uncontrolled cell proliferation: when overexpressed in cultured cells, higher proliferation rate and transformation are observed. Other target genes such as CRLF1, CRABP2, CRIP2, PIGF are strongly induced in cells with PLAG1 induction. Proto-oncogene whose ectopic expression can trigger the development of pleomorphic adenomas of the salivary gland and lipoblastomas. Overexpression is associated with up-regulation of IGFII, is frequently observed in hepatoblastoma, common primary liver tumor in childhood. Cooperates with CBFB-MYH11, a fusion gene important for myeloid leukemia. This is Zinc finger protein PLAG1 (PLAG1) from Homo sapiens (Human).